The primary structure comprises 258 residues: Global transcriptional regulator CodY (258 aa).

The GAF domain stretch occupies residues 1–156; that stretch reads MSSLLEKTRQ…SATIIGLEIL (156 aa). Positions 204-223 form a DNA-binding region, H-T-H motif; that stretch reads ASKIADKVGITRSVIVNALR.

Belongs to the CodY family.

The protein resides in the cytoplasm. DNA-binding global transcriptional regulator which is involved in the adaptive response to starvation and acts by directly or indirectly controlling the expression of numerous genes in response to nutrient availability. During rapid exponential growth, CodY is highly active and represses genes whose products allow adaptation to nutrient depletion. This is Global transcriptional regulator CodY from Clostridium tetani (strain Massachusetts / E88).